The sequence spans 289 residues: Glycine--tRNA ligase alpha subunit (289 aa).

This sequence belongs to the class-II aminoacyl-tRNA synthetase family. In terms of assembly, tetramer of two alpha and two beta subunits.

It localises to the cytoplasm. The catalysed reaction is tRNA(Gly) + glycine + ATP = glycyl-tRNA(Gly) + AMP + diphosphate. The sequence is that of Glycine--tRNA ligase alpha subunit from Rickettsia felis (strain ATCC VR-1525 / URRWXCal2) (Rickettsia azadi).